Here is a 445-residue protein sequence, read N- to C-terminus: Trigger factor (445 aa).

Positions 171–256 (NDIVIIDFKG…VHVVNEVETP (86 aa)) constitute a PPIase FKBP-type domain.

Belongs to the FKBP-type PPIase family. Tig subfamily.

The protein localises to the cytoplasm. The catalysed reaction is [protein]-peptidylproline (omega=180) = [protein]-peptidylproline (omega=0). Functionally, involved in protein export. Acts as a chaperone by maintaining the newly synthesized protein in an open conformation. Functions as a peptidyl-prolyl cis-trans isomerase. The polypeptide is Trigger factor (Malacoplasma penetrans (strain HF-2) (Mycoplasma penetrans)).